The primary structure comprises 302 residues: Oxygen-dependent coproporphyrinogen-III oxidase (302 aa).

A substrate-binding site is contributed by S94. A divalent metal cation contacts are provided by H98 and H108. The Proton donor role is filled by H108. 110 to 112 (NVR) provides a ligand contact to substrate. A divalent metal cation is bound by residues H147 and H177. The segment at 242-277 (YVEFNLVWDRGTLFGLQSGGRTESILMSMPPLARWE) is important for dimerization. 260 to 262 (GGR) provides a ligand contact to substrate.

This sequence belongs to the aerobic coproporphyrinogen-III oxidase family. In terms of assembly, homodimer. Requires a divalent metal cation as cofactor.

It localises to the cytoplasm. It carries out the reaction coproporphyrinogen III + O2 + 2 H(+) = protoporphyrinogen IX + 2 CO2 + 2 H2O. Its pathway is porphyrin-containing compound metabolism; protoporphyrin-IX biosynthesis; protoporphyrinogen-IX from coproporphyrinogen-III (O2 route): step 1/1. Involved in the heme biosynthesis. Catalyzes the aerobic oxidative decarboxylation of propionate groups of rings A and B of coproporphyrinogen-III to yield the vinyl groups in protoporphyrinogen-IX. This chain is Oxygen-dependent coproporphyrinogen-III oxidase, found in Photorhabdus laumondii subsp. laumondii (strain DSM 15139 / CIP 105565 / TT01) (Photorhabdus luminescens subsp. laumondii).